The chain runs to 179 residues: FAD-dependent monooxygenase nscC (179 aa).

An N-terminal signal peptide occupies residues 1–21 (MGKQQETILIIGAGISGLATS). The FAD site is built by E35 and A46. N92 is a glycosylation site (N-linked (GlcNAc...) asparagine). R119 serves as a coordination point for FAD. Residue N170 is glycosylated (N-linked (GlcNAc...) asparagine).

This sequence belongs to the paxM FAD-dependent monooxygenase family. FAD is required as a cofactor.

Its pathway is secondary metabolite biosynthesis. In terms of biological role, FAD-dependent monooxygenase; part of the gene cluster that mediates the biosynthesis of neosartoricin B, a prenylated anthracenone that probably exhibits T-cell antiproliferative activity, suggestive of a physiological role as an immunosuppressive agent. The non-reducing polyketide synthase nscA probably synthesizes and cyclizes the decaketide backbone. The hydrolase nscB then mediates the product release through hydrolysis followed by spontaneous decarboxylation. The prenyltransferase nscD catalyzes the addition of the dimethylallyl group to the aromatic C5. The FAD-dependent monooxygenase nscC is then responsible for the stereospecific hydroxylation at C2. Neosartoricin B can be converted into two additional compounds neosartoricins C and D. Neosartoricin C is a spirocyclic compound that is cyclized through the attack of C3 hydroxyl on C14, followed by dehydration. On the other hand, neosartoricin D is a further cyclized compound in which attack of C2 on C14 in neosartoricin C results in the formation of the acetal-containing dioxabicyclo-octanone ring. Both of these compounds are novel and possibly represent related metabolites of the gene cluster. The protein is FAD-dependent monooxygenase nscC of Trichophyton equinum (strain ATCC MYA-4606 / CBS 127.97) (Horse ringworm fungus).